Reading from the N-terminus, the 488-residue chain is Beta-xylosidase (488 aa).

Glutamate 163 (proton donor) is an active-site residue. The Nucleophile role is filled by glutamate 275.

The protein belongs to the glycosyl hydrolase 39 family.

The catalysed reaction is Hydrolysis of (1-&gt;4)-beta-D-xylans, to remove successive D-xylose residues from the non-reducing termini.. In terms of biological role, beta-xylosidase is an intracellular xylan-degrading enzyme. This chain is Beta-xylosidase (xynB), found in Caldicellulosiruptor saccharolyticus (Caldocellum saccharolyticum).